The sequence spans 789 residues: 1-phosphatidylinositol 4,5-bisphosphate phosphodiesterase delta-3 (789 aa).

In terms of domain architecture, PH spans 63–172 (RAMLRGSRLR…WVRGLTKLRA (110 aa)). Positions 73-101 (KIRSRTWHKERLYRLQEDGLSVWFQRRIP) are substrate binding. Serine 105 is modified (phosphoserine). EF-hand domains are found at residues 182–217 (RLDH…VNVD), 218–253 (MNDM…LLKR), and 250–285 (LLKR…QGEE). Ca(2+) is bound by residues aspartate 195, asparagine 197, aspartate 199, lysine 201, glutamate 206, aspartate 231, serine 233, asparagine 235, arginine 237, and glutamate 242. A PI-PLC X-box domain is found at 337–482 (QDMNQPLAHY…LKGRVLVKGK (146 aa)). Histidine 352 is an active-site residue. Ca(2+) is bound by residues asparagine 353, glutamate 382, and aspartate 384. Histidine 397 is a catalytic residue. A Ca(2+)-binding site is contributed by glutamate 431. The segment at 461–519 (SPNPEELPSPEQLKGRVLVKGKKLPAARSEDGRALSDREEEEEDDEEEEEEVEAAAQRR) is disordered. The substrate site is built by lysine 480 and lysine 482. The span at 488-497 (RSEDGRALSD) shows a compositional bias: basic and acidic residues. Position 496 is a phosphoserine (serine 496). Residues 498–513 (REEEEEDDEEEEEEVE) are compositionally biased toward acidic residues. Positions 528–644 (LSALAVYCHA…GYVLKPACLR (117 aa)) constitute a PI-PLC Y-box domain. Serine 557 lines the substrate pocket. Serine 573 carries the post-translational modification Phosphoserine. Residue arginine 584 participates in substrate binding. The region spanning 644 to 769 (RQPDSTFDPE…QGYRHIHLLS (126 aa)) is the C2 domain. Isoleucine 683, aspartate 685, asparagine 709, aspartate 738, tyrosine 739, and aspartate 740 together coordinate Ca(2+).

The cofactor is Ca(2+). As to expression, present in corneal epithelial cells (at protein level).

It localises to the membrane. The protein localises to the cytoplasm. Its subcellular location is the cleavage furrow. The catalysed reaction is a 1,2-diacyl-sn-glycero-3-phospho-(1D-myo-inositol-4,5-bisphosphate) + H2O = 1D-myo-inositol 1,4,5-trisphosphate + a 1,2-diacyl-sn-glycerol + H(+). Strongly activated by phosphatidic acid. Inhibited by phosphatidylethanolamine (PtdEtn), phosphatidylcholine (PtdCho), sphingomyelin and phosphatidylserine (PtdSer). In terms of biological role, hydrolyzes the phosphatidylinositol 4,5-bisphosphate (PIP2) to generate 2 second messenger molecules diacylglycerol (DAG) and inositol 1,4,5-trisphosphate (IP3). DAG mediates the activation of protein kinase C (PKC), while IP3 releases Ca(2+) from intracellular stores. Essential for trophoblast and placental development. May participate in cytokinesis by hydrolyzing PIP2 at the cleavage furrow. Regulates neurite outgrowth through the inhibition of RhoA/Rho kinase signaling. This is 1-phosphatidylinositol 4,5-bisphosphate phosphodiesterase delta-3 from Homo sapiens (Human).